Consider the following 103-residue polypeptide: Auxin-responsive protein SAUR50 (103 aa).

Belongs to the ARG7 family.

Effector of hormonal and environmental signals in plant growth. Involved in heliotropism. This chain is Auxin-responsive protein SAUR50, found in Helianthus annuus (Common sunflower).